Reading from the N-terminus, the 200-residue chain is Small ribosomal subunit protein uS4c (200 aa).

The disordered stretch occupies residues 20–42; sequence GLTRKTTTRTSRPGQHGTQARKP. Positions 23–37 are enriched in polar residues; that stretch reads RKTTTRTSRPGQHGT. Positions 90–152 constitute an S4 RNA-binding domain; it reads MRLDNVIFRL…PKSQSIVKNY (63 aa).

This sequence belongs to the universal ribosomal protein uS4 family. In terms of assembly, part of the 30S ribosomal subunit. Contacts protein S5. The interaction surface between S4 and S5 is involved in control of translational fidelity.

The protein localises to the plastid. Its subcellular location is the chloroplast. Functionally, one of the primary rRNA binding proteins, it binds directly to 16S rRNA where it nucleates assembly of the body of the 30S subunit. Its function is as follows. With S5 and S12 plays an important role in translational accuracy. The sequence is that of Small ribosomal subunit protein uS4c (rps4) from Guillardia theta (Cryptophyte).